We begin with the raw amino-acid sequence, 240 residues long: Pyridoxine 5'-phosphate synthase (240 aa).

Asn6 serves as a coordination point for 3-amino-2-oxopropyl phosphate. A 1-deoxy-D-xylulose 5-phosphate-binding site is contributed by 8–9; the sequence is DH. Residue Arg17 coordinates 3-amino-2-oxopropyl phosphate. His42 serves as the catalytic Proton acceptor. 2 residues coordinate 1-deoxy-D-xylulose 5-phosphate: Arg44 and His49. The Proton acceptor role is filled by Glu69. Thr99 contributes to the 1-deoxy-D-xylulose 5-phosphate binding site. The Proton donor role is filled by His190. 3-amino-2-oxopropyl phosphate contacts are provided by residues Gly191 and 212–213; that span reads GH.

It belongs to the PNP synthase family. Homooctamer; tetramer of dimers.

The protein localises to the cytoplasm. It carries out the reaction 3-amino-2-oxopropyl phosphate + 1-deoxy-D-xylulose 5-phosphate = pyridoxine 5'-phosphate + phosphate + 2 H2O + H(+). It participates in cofactor biosynthesis; pyridoxine 5'-phosphate biosynthesis; pyridoxine 5'-phosphate from D-erythrose 4-phosphate: step 5/5. Catalyzes the complicated ring closure reaction between the two acyclic compounds 1-deoxy-D-xylulose-5-phosphate (DXP) and 3-amino-2-oxopropyl phosphate (1-amino-acetone-3-phosphate or AAP) to form pyridoxine 5'-phosphate (PNP) and inorganic phosphate. This is Pyridoxine 5'-phosphate synthase from Pseudomonas entomophila (strain L48).